The primary structure comprises 444 residues: Inward rectifier potassium channel 4 (444 aa).

Residues 1-55 are Cytoplasmic-facing; the sequence is MHGHNRNGQAHVPRRKRRNRFVKKNGQCNVYFANLSNKSQRYMADIFTTCVDTRW. A helical transmembrane segment spans residues 56-80; it reads RYMLMLFSAAFLVSWLFFGLLFWCI. At 81–119 the chain is on the extracellular side; that stretch reads AFFHGDLEASPSVPAAGAPGGNGGAAPAAPKPCIMHVNG. Positions 120-131 form an intramembrane region, helical; Pore-forming; it reads FLGAFLFSVETQ. Positions 132–138 form an intramembrane region, pore-forming; that stretch reads TTIGYGF. The Selectivity filter signature appears at 133–138; the sequence is TIGYGF. The Extracellular segment spans residues 139–147; it reads RCVTEECPL. The chain crosses the membrane as a helical span at residues 148–169; it reads AVIAVVVQSIVGCVIDSFMIGT. Residues 170–444 are Cytoplasmic-facing; that stretch reads IMAKMARPKK…NISYRRESAI (275 aa). Positions 442-444 match the PDZ-binding motif; that stretch reads SAI.

The protein belongs to the inward rectifier-type potassium channel (TC 1.A.2.1) family. KCNJ4 subfamily. Homomultimeric and heteromultimeric association with KCNJ2 and KCNJ12. Interacts with DLG2 and DLG4. Associates, via its PDZ-recognition domain, with a complex containing LIN7A, LIN7B, LIN7C, DLG1, CASK and APBA1. Interacts with TAX1BP3. TAX1BP3 competes with LIN7 family members for KCNJ4 binding.

It is found in the cell membrane. The protein localises to the postsynaptic cell membrane. The protein resides in the cytoplasmic vesicle membrane. It carries out the reaction K(+)(in) = K(+)(out). Its function is as follows. Inward rectifier potassium channels are characterized by a greater tendency to allow potassium to flow into the cell rather than out of it. Their voltage dependence is regulated by the concentration of extracellular potassium; as external potassium is raised, the voltage range of the channel opening shifts to more positive voltages. The inward rectification is mainly due to the blockage of outward current by internal magnesium. Can be blocked by extracellular barium and cesium. In Mesocricetus auratus (Golden hamster), this protein is Inward rectifier potassium channel 4 (KCNJ4).